The following is a 315-amino-acid chain: Ribosomal RNA small subunit methyltransferase H (315 aa).

Residues 36–38 (GGH), aspartate 56, phenylalanine 81, aspartate 103, and glutamine 110 each bind S-adenosyl-L-methionine.

Belongs to the methyltransferase superfamily. RsmH family.

Its subcellular location is the cytoplasm. The enzyme catalyses cytidine(1402) in 16S rRNA + S-adenosyl-L-methionine = N(4)-methylcytidine(1402) in 16S rRNA + S-adenosyl-L-homocysteine + H(+). In terms of biological role, specifically methylates the N4 position of cytidine in position 1402 (C1402) of 16S rRNA. The protein is Ribosomal RNA small subunit methyltransferase H of Idiomarina loihiensis (strain ATCC BAA-735 / DSM 15497 / L2-TR).